Here is a 323-residue protein sequence, read N- to C-terminus: Beta-ketoacyl-[acyl-carrier-protein] synthase III (323 aa).

Catalysis depends on residues cysteine 113 and histidine 250. Residues 251 to 255 form an ACP-binding region; sequence QANKR. The active site involves asparagine 280.

The protein belongs to the thiolase-like superfamily. FabH family. Homodimer.

The protein resides in the cytoplasm. The enzyme catalyses malonyl-[ACP] + acetyl-CoA + H(+) = 3-oxobutanoyl-[ACP] + CO2 + CoA. It participates in lipid metabolism; fatty acid biosynthesis. Catalyzes the condensation reaction of fatty acid synthesis by the addition to an acyl acceptor of two carbons from malonyl-ACP. Catalyzes the first condensation reaction which initiates fatty acid synthesis and may therefore play a role in governing the total rate of fatty acid production. Possesses both acetoacetyl-ACP synthase and acetyl transacylase activities. Its substrate specificity determines the biosynthesis of branched-chain and/or straight-chain of fatty acids. The chain is Beta-ketoacyl-[acyl-carrier-protein] synthase III from Brucella canis (strain ATCC 23365 / NCTC 10854 / RM-666).